Consider the following 302-residue polypeptide: Sulfate adenylyltransferase subunit 2 (302 aa).

The protein belongs to the PAPS reductase family. CysD subfamily. As to quaternary structure, heterodimer composed of CysD, the smaller subunit, and CysN.

The enzyme catalyses sulfate + ATP + H(+) = adenosine 5'-phosphosulfate + diphosphate. Its pathway is sulfur metabolism; hydrogen sulfide biosynthesis; sulfite from sulfate: step 1/3. In terms of biological role, with CysN forms the ATP sulfurylase (ATPS) that catalyzes the adenylation of sulfate producing adenosine 5'-phosphosulfate (APS) and diphosphate, the first enzymatic step in sulfur assimilation pathway. APS synthesis involves the formation of a high-energy phosphoric-sulfuric acid anhydride bond driven by GTP hydrolysis by CysN coupled to ATP hydrolysis by CysD. The sequence is that of Sulfate adenylyltransferase subunit 2 from Parabacteroides distasonis (strain ATCC 8503 / DSM 20701 / CIP 104284 / JCM 5825 / NCTC 11152).